A 235-amino-acid polypeptide reads, in one-letter code: ATP-dependent Clp protease proteolytic subunit (235 aa).

Catalysis depends on serine 123, which acts as the Nucleophile. Residue histidine 148 is part of the active site.

This sequence belongs to the peptidase S14 family. Fourteen ClpP subunits assemble into 2 heptameric rings which stack back to back to give a disk-like structure with a central cavity, resembling the structure of eukaryotic proteasomes.

It is found in the cytoplasm. It catalyses the reaction Hydrolysis of proteins to small peptides in the presence of ATP and magnesium. alpha-casein is the usual test substrate. In the absence of ATP, only oligopeptides shorter than five residues are hydrolyzed (such as succinyl-Leu-Tyr-|-NHMec, and Leu-Tyr-Leu-|-Tyr-Trp, in which cleavage of the -Tyr-|-Leu- and -Tyr-|-Trp bonds also occurs).. Its function is as follows. Cleaves peptides in various proteins in a process that requires ATP hydrolysis. Has a chymotrypsin-like activity. Plays a major role in the degradation of misfolded proteins. The polypeptide is ATP-dependent Clp protease proteolytic subunit (Novosphingobium aromaticivorans (strain ATCC 700278 / DSM 12444 / CCUG 56034 / CIP 105152 / NBRC 16084 / F199)).